A 339-amino-acid polypeptide reads, in one-letter code: Serine racemase (339 aa).

ATP-binding residues include serine 43 and lysine 63. The active-site Proton acceptor is lysine 68. Lysine 68 carries the post-translational modification N6-(pyridoxal phosphate)lysine. Threonine 90 is a Ca(2+) binding site. Residue serine 93 is the Proton acceptor of the active site. Asparagine 95 provides a ligand contact to pyridoxal 5'-phosphate. Cysteine 122 is subject to S-nitrosocysteine. Tyrosine 130 is an ATP binding site. Residue aspartate 187 coordinates Mg(2+). Pyridoxal 5'-phosphate contacts are provided by glycine 195, glycine 196, and glycine 197. Glutamate 219, alanine 223, and aspartate 225 together coordinate Ca(2+). 3 residues coordinate Mg(2+): glutamate 219, alanine 223, and aspartate 225. Residues glutamate 219, alanine 223, and aspartate 225 each contribute to the Mn(2+) site. ATP is bound at residue lysine 287. Serine 323 contacts pyridoxal 5'-phosphate. Asparagine 326 is a binding site for ATP.

Belongs to the serine/threonine dehydratase family. The cofactor is Mg(2+). Requires Mn(2+) as cofactor. It depends on Ca(2+) as a cofactor. Pyridoxal 5'-phosphate is required as a cofactor.

It carries out the reaction L-serine = D-serine. The catalysed reaction is L-serine = pyruvate + NH4(+). The enzyme catalyses D-serine = pyruvate + NH4(+). Catalyzes the synthesis of D-serine from L-serine. Has dehydratase activity towards both L-serine and D-serine. The polypeptide is Serine racemase (Oryza sativa subsp. indica (Rice)).